The primary structure comprises 147 residues: Hemoglobin subunit beta (147 aa).

Val-2 carries the post-translational modification N-acetylvaline. One can recognise a Globin domain in the interval 3–147 (HLTGEEKGIV…VATALAHKYH (145 aa)). Residue Thr-13 is modified to Phosphothreonine. The residue at position 45 (Ser-45) is a Phosphoserine. Lys-60 bears the N6-acetyllysine mark. His-64 is a heme b binding site. Lys-83 carries the post-translational modification N6-acetyllysine. Heme b is bound at residue His-93. Cys-94 bears the S-nitrosocysteine mark. At Lys-145 the chain carries N6-acetyllysine.

This sequence belongs to the globin family. In terms of assembly, heterotetramer of two alpha chains and two beta chains. As to expression, red blood cells.

Its function is as follows. Involved in oxygen transport from the lung to the various peripheral tissues. The chain is Hemoglobin subunit beta (HBB) from Rhinolophus ferrumequinum (Greater horseshoe bat).